We begin with the raw amino-acid sequence, 324 residues long: tRNA dimethylallyltransferase (324 aa).

17-24 (GPTASGKT) lines the ATP pocket. Residue 19-24 (TASGKT) participates in substrate binding. Interaction with substrate tRNA regions lie at residues 42-45 (DSAL), 166-170 (QRIQR), and 251-256 (RCVGYR).

It belongs to the IPP transferase family. As to quaternary structure, monomer. It depends on Mg(2+) as a cofactor.

It carries out the reaction adenosine(37) in tRNA + dimethylallyl diphosphate = N(6)-dimethylallyladenosine(37) in tRNA + diphosphate. Functionally, catalyzes the transfer of a dimethylallyl group onto the adenine at position 37 in tRNAs that read codons beginning with uridine, leading to the formation of N6-(dimethylallyl)adenosine (i(6)A). The sequence is that of tRNA dimethylallyltransferase from Burkholderia mallei (strain NCTC 10247).